The sequence spans 254 residues: Adenosylcobinamide-GDP ribazoletransferase (254 aa).

Helical transmembrane passes span 27–47 (SSLY…VLLA), 50–70 (GMGV…GLIL), 104–124 (VGSF…ICLL), 131–151 (AYGM…LLAA), 170–190 (AGWP…FVLL), 194–214 (LAPS…VGWL), and 233–253 (LVEA…FWAI).

Belongs to the CobS family. Requires Mg(2+) as cofactor.

It is found in the cell inner membrane. It catalyses the reaction alpha-ribazole + adenosylcob(III)inamide-GDP = adenosylcob(III)alamin + GMP + H(+). The catalysed reaction is alpha-ribazole 5'-phosphate + adenosylcob(III)inamide-GDP = adenosylcob(III)alamin 5'-phosphate + GMP + H(+). The protein operates within cofactor biosynthesis; adenosylcobalamin biosynthesis; adenosylcobalamin from cob(II)yrinate a,c-diamide: step 7/7. In terms of biological role, joins adenosylcobinamide-GDP and alpha-ribazole to generate adenosylcobalamin (Ado-cobalamin). Also synthesizes adenosylcobalamin 5'-phosphate from adenosylcobinamide-GDP and alpha-ribazole 5'-phosphate. The protein is Adenosylcobinamide-GDP ribazoletransferase of Chlorobaculum tepidum (strain ATCC 49652 / DSM 12025 / NBRC 103806 / TLS) (Chlorobium tepidum).